The primary structure comprises 286 residues: Phosducin-like protein 2 (286 aa).

2 positions are modified to phosphoserine: Ser35 and Ser62. A thioredoxin fold region spans residues 96–286 (FGEVFHINKP…INDDDDGFFD (191 aa)).

Belongs to the phosducin family. In terms of assembly, interacts with the G protein beta-gamma subunit complex (STE4-STE18 complex). Interacts with CCT2; this interaction leads to inhibition of CCT complex mediated actin folding.

The protein resides in the cytoplasm. In terms of biological role, essential for cell growth. Inhibits early G-protein signaling events following pheromone stimulation. Inhibits the folding activity of the chaperonin-containing T-complex (CCT) CCT2 which leads to inhibition of cytoskeletal actin folding. Plays a role in cell cycle progression in G1/S phase. The protein is Phosducin-like protein 2 of Saccharomyces cerevisiae (strain ATCC 204508 / S288c) (Baker's yeast).